Consider the following 412-residue polypeptide: Multifunctional CCA protein (412 aa).

Positions 8 and 11 each coordinate ATP. CTP is bound by residues glycine 8 and arginine 11. Aspartate 21 and aspartate 23 together coordinate Mg(2+). Residues arginine 91, arginine 137, and arginine 140 each contribute to the ATP site. Arginine 91, arginine 137, and arginine 140 together coordinate CTP. The 102-residue stretch at 228-329 (TGIHTLMTLS…VKLFDSIDAW (102 aa)) folds into the HD domain.

Belongs to the tRNA nucleotidyltransferase/poly(A) polymerase family. Bacterial CCA-adding enzyme type 1 subfamily. In terms of assembly, monomer. Can also form homodimers and oligomers. It depends on Mg(2+) as a cofactor. The cofactor is Ni(2+).

It carries out the reaction a tRNA precursor + 2 CTP + ATP = a tRNA with a 3' CCA end + 3 diphosphate. The catalysed reaction is a tRNA with a 3' CCA end + 2 CTP + ATP = a tRNA with a 3' CCACCA end + 3 diphosphate. Its function is as follows. Catalyzes the addition and repair of the essential 3'-terminal CCA sequence in tRNAs without using a nucleic acid template. Adds these three nucleotides in the order of C, C, and A to the tRNA nucleotide-73, using CTP and ATP as substrates and producing inorganic pyrophosphate. tRNA 3'-terminal CCA addition is required both for tRNA processing and repair. Also involved in tRNA surveillance by mediating tandem CCA addition to generate a CCACCA at the 3' terminus of unstable tRNAs. While stable tRNAs receive only 3'-terminal CCA, unstable tRNAs are marked with CCACCA and rapidly degraded. The polypeptide is Multifunctional CCA protein (Shigella flexneri serotype 5b (strain 8401)).